We begin with the raw amino-acid sequence, 655 residues long: MGIFSIANQHIRFAVKLATAIVLALFVGFHFQLETPRWAVLTAAIVAAGPAFAAGGEPYSGAIRYRGFLRIIGTFIGCIAGLVIIIAMIRAPLLMILVCCIWAGFCTWISSLVRIENSYAWGLAGYTALIIVITIQPEPLLTPQFAVERCSEIVIGIVCAIMADLLFSPRSIKQEVDRELESLLVAQYQLMQLCIKHGDGEVVDKAWGDLVRRTTALQGMRSNLNMESSRWARANRRLKAINTLSLTLITQSCETYLIQNTRPELITDTFREFFDTPVETAQDVHKQLKRLRRVIAWTGERETPVTIYSWVAAATRYQLLKRGVISNTKINATEEEILQGEPEVKVESAERHHAMVNFWRTTLSCILGTLFWLWTGWTSGSGAMVMIAVVTSLAMRLPNPRMVAIDFIYGTLAALPLGLLYFLVIIPNTQQSMLLLCISLAVLGFFLGIEVQKRRLGSMGALASTINIIVLDNPMTFHFSQFLDSALGQIVGCVLAFTVILLVRDKSRDRTGRVLLNQFVSAAVSAMTTNVARRKENHLPALYQQLFLLMNKFPGDLPKFRLALTMIIAHQRLRDAPIPVNEDLSAFHRQMRRTADHVISARSDDKRRRYFGQLLEELEIYQEKLRIWQAPPQVTEPVNRLAGMLHKYQHALTDS.

Helical transmembrane passes span 13–33 (FAVKLATAIVLALFVGFHFQL), 38–58 (WAVLTAAIVAAGPAFAAGGEP), 69–89 (LRIIGTFIGCIAGLVIIIAMI), 93–113 (LLMILVCCIWAGFCTWISSLV), 121–141 (WGLAGYTALIIVITIQPEPLL), 152–172 (EIVIGIVCAIMADLLFSPRSI), 370–390 (LFWLWTGWTSGSGAMVMIAVV), 407–427 (FIYGTLAALPLGLLYFLVIIP), 431–451 (QSMLLLCISLAVLGFFLGIEV), 459–479 (MGALASTINIIVLDNPMTFHF), and 482–502 (FLDSALGQIVGCVLAFTVILL).

Belongs to the aromatic acid exporter ArAE (TC 2.A.85) family.

The protein resides in the cell inner membrane. Forms an efflux pump with AaeA. Could function as a metabolic relief valve, allowing to eliminate certain compounds when they accumulate to high levels in the cell. In Escherichia coli (strain K12 / MC4100 / BW2952), this protein is p-hydroxybenzoic acid efflux pump subunit AaeB.